The sequence spans 372 residues: MTEIDYYELLEISRNSDKSTIKKAYRQMAMKYHPDKNPGDNEAEEKFKAINEAYQVLSDDEKKSIYDRYGKAGLEGHGQRGGGFSGGFDDLGSIFEEMFGFGTSSRSRRERKTYNYNLDVTIEVKLEFNEAVFGCNKEINYKYKTACKPCEGTGAKDGKLSTCPTCKGQGQVHSRQGFMTFAQTCPRCGGTGQATTDSCKSCKGTGYEEVKDNFKVDIPEGVNDGMRIRVSNKGNIAPNGQRGDLYLQVSVKEDSHFVRHDDDIYFEAPIFFTQVALGGTIKVPSLRGELELEIPKGAKDKQQFTFKGEGVKSVQGYGKGDLIIQIKIEYPKALNNEQKELLEKLQDSFGIESKPHETTFEGMFDKVKKWFS.

The region spanning 5-70 is the J domain; that stretch reads DYYELLEISR…EKKSIYDRYG (66 aa). Residues 134 to 211 form a CR-type zinc finger; sequence GCNKEINYKY…CKGTGYEEVK (78 aa). Residues Cys147, Cys150, Cys163, Cys166, Cys185, Cys188, Cys199, and Cys202 each coordinate Zn(2+). 4 CXXCXGXG motif repeats span residues 147 to 154, 163 to 170, 185 to 192, and 199 to 206; these read CKPCEGTG, CPTCKGQG, CPRCGGTG, and CKSCKGTG.

Belongs to the DnaJ family. Homodimer. Zn(2+) is required as a cofactor.

Its subcellular location is the cytoplasm. Participates actively in the response to hyperosmotic and heat shock by preventing the aggregation of stress-denatured proteins and by disaggregating proteins, also in an autonomous, DnaK-independent fashion. Unfolded proteins bind initially to DnaJ; upon interaction with the DnaJ-bound protein, DnaK hydrolyzes its bound ATP, resulting in the formation of a stable complex. GrpE releases ADP from DnaK; ATP binding to DnaK triggers the release of the substrate protein, thus completing the reaction cycle. Several rounds of ATP-dependent interactions between DnaJ, DnaK and GrpE are required for fully efficient folding. Also involved, together with DnaK and GrpE, in the DNA replication of plasmids through activation of initiation proteins. In Aliarcobacter butzleri (strain RM4018) (Arcobacter butzleri), this protein is Chaperone protein DnaJ.